The following is a 370-amino-acid chain: Keratin-associated protein 10-7 (370 aa).

The tract at residues 36 to 363 (DCPESCCEPP…CSRPACCGPT (328 aa)) is 30 X 5 AA repeats of C-C-X(3). 30 repeat units span residues 41 to 45 (CCEPP), 46 to 50 (CCAPA), 67 to 71 (CCRVT), 89 to 93 (CCQQS), 99 to 103 (CCASS), 109 to 113 (CCVPV), 114 to 118 (CCKTV), 119 to 123 (CCKPV), 135 to 139 (CCQQS), 145 to 149 (CCTSS), 155 to 159 (CCVPI), 160 to 164 (CCKPV), 172 to 176 (CCQQS), 186 to 190 (CCQAV), 208 to 212 (CCQQS), 218 to 222 (CCTSS), 228 to 232 (CCVPV), 233 to 237 (CCKPV), 238 to 242 (CCVPT), 250 to 254 (CCQPA), 255 to 259 (CCTSS), 265 to 269 (CCVPV), 270 to 274 (CCKPV), 275 to 279 (CCVPV), 287 to 291 (CCQQS), 297 to 301 (CCTTS), 302 to 306 (CCRPS), 321 to 325 (CCVPV), 339 to 343 (CCRPA), and 359 to 363 (CCGPT).

It belongs to the KRTAP type 10 family. Interacts with hair keratins. In terms of tissue distribution, restricted to a narrow region of the hair fiber cuticle, lying approximately 20 cell layers above the apex of the dermal papilla of the hair root; not detected in any other tissues.

In the hair cortex, hair keratin intermediate filaments are embedded in an interfilamentous matrix, consisting of hair keratin-associated proteins (KRTAP), which are essential for the formation of a rigid and resistant hair shaft through their extensive disulfide bond cross-linking with abundant cysteine residues of hair keratins. The matrix proteins include the high-sulfur and high-glycine-tyrosine keratins. This is Keratin-associated protein 10-7 (KRTAP10-7) from Homo sapiens (Human).